We begin with the raw amino-acid sequence, 557 residues long: Resveratrol cleavage oxygenase 1 (557 aa).

The disordered stretch occupies residues 1 to 46 (MAILNDPPSSTTILSLHTPDVPPPSKPTPATTSHPQDSRNPRNLTS). Residues Y144 and K177 each coordinate piceatannol. The trans-resveratrol site is built by Y144 and K177. 3 residues coordinate Fe cation: H211, H262, and H334. E404 is a piceatannol binding site. E404 contributes to the trans-resveratrol binding site. H523 serves as a coordination point for Fe cation.

It belongs to the carotenoid oxygenase family. Fe(2+) is required as a cofactor.

It carries out the reaction trans-resveratrol + O2 = 3,5-dihydroxybenzaldehyde + 4-hydroxybenzaldehyde. It catalyses the reaction piceatannol + O2 = 3,5-dihydroxybenzaldehyde + 3,4-dihydroxybenzaldehyde. Functionally, dioxygenase that cleaves the interphenyl C-alpha-C-beta double bond of resveratrol to yield 3,5-dihydroxybenzaldehyde and 4-hydroxybenzaldehyde. Also cleaves piceatannol, a compound that differs from resveratrol only in the occurrence of an additional hydroxyl group, which leads to the production of 3,4-dihydroxybenzaldehyde and 3,5-hydroxybenzaldehyde. The sequence is that of Resveratrol cleavage oxygenase 1 from Botryotinia fuckeliana (strain B05.10) (Noble rot fungus).